A 296-amino-acid polypeptide reads, in one-letter code: Tyrosine recombinase XerC (296 aa).

The region spanning alanine 2 to leucine 85 is the Core-binding (CB) domain. The Tyr recombinase domain maps to threonine 106–aspartate 285. Active-site residues include arginine 145, lysine 169, histidine 237, arginine 240, and histidine 263. Tyrosine 272 functions as the O-(3'-phospho-DNA)-tyrosine intermediate in the catalytic mechanism.

It belongs to the 'phage' integrase family. XerC subfamily. Forms a cyclic heterotetrameric complex composed of two molecules of XerC and two molecules of XerD.

It is found in the cytoplasm. Its function is as follows. Site-specific tyrosine recombinase, which acts by catalyzing the cutting and rejoining of the recombining DNA molecules. The XerC-XerD complex is essential to convert dimers of the bacterial chromosome into monomers to permit their segregation at cell division. It also contributes to the segregational stability of plasmids. The chain is Tyrosine recombinase XerC from Shewanella amazonensis (strain ATCC BAA-1098 / SB2B).